A 251-amino-acid chain; its full sequence is Small ribosomal subunit protein uS2 (251 aa).

Serine 2 bears the N-acetylserine mark. The disordered stretch occupies residues 209 to 251; the sequence is EIEQQTAEEAAQEAGEEEAKEEVTEEQTEAAEWAQENADNVEW. The span at 218 to 237 shows a compositional bias: acidic residues; sequence AAQEAGEEEAKEEVTEEQTE. Residues 238–251 show a composition bias toward low complexity; sequence AAEWAQENADNVEW.

Belongs to the universal ribosomal protein uS2 family. Component of the small ribosomal subunit. Mature ribosomes consist of a small (40S) and a large (60S) subunit. The 40S subunit contains about 33 different proteins and 1 molecule of RNA (18S). The 60S subunit contains about 49 different proteins and 3 molecules of RNA (25S, 5.8S and 5S). Interacts with RPS21.

Its subcellular location is the cytoplasm. Required for the assembly and/or stability of the 40S ribosomal subunit. Required for the processing of the 20S rRNA-precursor to mature 18S rRNA in a late step of the maturation of 40S ribosomal subunits. This chain is Small ribosomal subunit protein uS2, found in Candida glabrata (strain ATCC 2001 / BCRC 20586 / JCM 3761 / NBRC 0622 / NRRL Y-65 / CBS 138) (Yeast).